The chain runs to 225 residues: Uracil-DNA glycosylase (225 aa).

Asp-65 functions as the Proton acceptor in the catalytic mechanism.

The protein belongs to the uracil-DNA glycosylase (UDG) superfamily. UNG family.

The protein localises to the cytoplasm. It carries out the reaction Hydrolyzes single-stranded DNA or mismatched double-stranded DNA and polynucleotides, releasing free uracil.. Its function is as follows. Excises uracil residues from the DNA which can arise as a result of misincorporation of dUMP residues by DNA polymerase or due to deamination of cytosine. The sequence is that of Uracil-DNA glycosylase from Bacillus cereus (strain AH820).